The primary structure comprises 963 residues: Protein NLP2 (963 aa).

The 82-residue stretch at 635 to 716 (RRPGEKRRTK…IDSVQGVQGS (82 aa)) folds into the RWP-RK domain. Over residues 734-755 (MSGTGTSFKNPNAQTENGVSAQ) the composition is skewed to polar residues. The tract at residues 734–794 (MSGTGTSFKN…QSTNTGTTSN (61 aa)) is disordered. Positions 756-794 (GTAAAPKSPPSSSCSHSSGSSTCCSTGANQSTNTGTTSN) are enriched in low complexity. The region spanning 862–945 (ASKVKATFGE…RTIKISVHEA (84 aa)) is the PB1 domain.

The protein resides in the nucleus. Its function is as follows. Probable transcription factor. This Arabidopsis thaliana (Mouse-ear cress) protein is Protein NLP2 (NLP2).